We begin with the raw amino-acid sequence, 751 residues long: WD repeat-containing protein 91 (751 aa).

Residues 183–205 (QKIACLQEENEIMRQKLFALQAE) are a coiled coil. The segment at 237-398 (ELGSNIMSSH…GARKEEKPAQ (162 aa)) is disordered. A compositionally biased stretch (polar residues) spans 238–267 (LGSNIMSSHSNTNMNTPSQRTSGFLSSLLA). The segment covering 356–373 (TEKKAENSDADPDLRSDT) has biased composition (basic and acidic residues). WD repeat units follow at residues 410–449 (EHHS…QTKA), 452–492 (ISKS…NLCE), 517–559 (SAAA…QQLQ), 564–603 (PVPI…CALS), 606–645 (AHMG…QKVS), 668–706 (VQFP…STLE), and 713–751 (GHRA…AQKS).

It belongs to the WD repeat WDR91 family.

Its subcellular location is the early endosome membrane. It localises to the late endosome membrane. Functions as a negative regulator of the PI3 kinase/PI3K activity associated with endosomal membranes. By modifying the phosphatidylinositol 3-phosphate/PtdInsP3 content of endosomal membranes may regulate endosome fusion, recycling, sorting and early to late endosome transport. In Xenopus tropicalis (Western clawed frog), this protein is WD repeat-containing protein 91.